Reading from the N-terminus, the 509-residue chain is Maturase K (509 aa).

It belongs to the intron maturase 2 family. MatK subfamily.

Its subcellular location is the plastid. The protein resides in the chloroplast. Its function is as follows. Usually encoded in the trnK tRNA gene intron. Probably assists in splicing its own and other chloroplast group II introns. The polypeptide is Maturase K (Schlumbergera truncata (Thanksgiving cactus)).